Consider the following 147-residue polypeptide: Putative pre-16S rRNA nuclease (147 aa).

Belongs to the YqgF nuclease family.

Its subcellular location is the cytoplasm. Its function is as follows. Could be a nuclease involved in processing of the 5'-end of pre-16S rRNA. The sequence is that of Putative pre-16S rRNA nuclease from Limosilactobacillus reuteri (strain DSM 20016) (Lactobacillus reuteri).